A 264-amino-acid chain; its full sequence is MAGEQKPSSNLLEQFILLAKGTSGSALTTLISQVLEAPGVYVFGELLELANVQELAEGANAAYLQLLNLFAYGTYPDYIANKESLPELSVAQQNKLKHLTIVSLASRMKCIPYSVLLKDLEMRNLRELEDLIIEAVYTDIIQGKLDQRNQLLEVDFCIGRDIRKKDINNIVKTLHEWCDGCEAVLLGIEQQVLRANQYKENHHRTQQQVEAEVSNIKKTLKATASSSAQEMEQQLAERECPPHTEQRQPTKKMSKVKGLVSSRH.

Position 2 is an N-acetylalanine (alanine 2). The region spanning 2–159 (AGEQKPSSNL…QLLEVDFCIG (158 aa)) is the PCI domain. Positions 194–237 (RANQYKENHHRTQQQVEAEVSNIKKTLKATASSSAQEMEQQLAE) form a coiled coil. Residues 223 to 232 (TASSSAQEME) are compositionally biased toward polar residues. The disordered stretch occupies residues 223 to 264 (TASSSAQEMEQQLAERECPPHTEQRQPTKKMSKVKGLVSSRH). Positions 235–248 (LAERECPPHTEQRQ) are enriched in basic and acidic residues.

It belongs to the CSN7/EIF3M family. CSN7 subfamily. In terms of assembly, component of the CSN complex, composed of COPS1/GPS1, COPS2, COPS3, COPS4, COPS5, COPS6, COPS7 (COPS7A or COPS7B) and COPS8 and COPS9. In the complex, it probably interacts directly with COPS1, COPS2, COPS4, COPS5, COPS6 and COPS8. Interacts with EIF3S6.

It is found in the cytoplasm. The protein localises to the nucleus. Functionally, component of the COP9 signalosome complex (CSN), a complex involved in various cellular and developmental processes. The CSN complex is an essential regulator of the ubiquitin (Ubl) conjugation pathway by mediating the deneddylation of the cullin subunits of SCF-type E3 ligase complexes, leading to decrease the Ubl ligase activity of SCF-type complexes such as SCF, CSA or DDB2. The complex is also involved in phosphorylation of p53/TP53, JUN, I-kappa-B-alpha/NFKBIA, ITPK1 and IRF8/ICSBP, possibly via its association with CK2 and PKD kinases. CSN-dependent phosphorylation of TP53 and JUN promotes and protects degradation by the Ubl system, respectively. The chain is COP9 signalosome complex subunit 7b (Cops7b) from Mus musculus (Mouse).